The sequence spans 1099 residues: Solute carrier family 38 member 10 (1099 aa).

10 helical membrane-spanning segments follow: residues 9 to 31 (WGLV…PFCF), 36 to 58 (IVLG…MFLV), 84 to 104 (LVET…YVVI), 123 to 143 (TFRV…LSLQ), 153 to 173 (FSAM…LSSF), 229 to 249 (IFAS…FFGY), 272 to 292 (MIRV…ILPC), 323 to 343 (VLTL…PNVE), 345 to 365 (ILGF…PALI), and 378 to 398 (VVLW…LSVS). Disordered stretches follow at residues 440-679 (DSQE…EEAG) and 720-1047 (EIRQ…LAPK). Position 441 is a phosphoserine (S441). 5 stretches are compositionally biased toward basic and acidic residues: residues 441–454 (SQEK…KEVL), 493–508 (EAHR…KVVV), 517–528 (PEEKKPPPKLPD), 544–561 (ESEK…KRPE), and 586–599 (PRKE…RDLH). 2 positions are modified to phosphoserine: S607 and S635. Basic and acidic residues-rich tracts occupy residues 653–663 (EAAEQREKNEA), 720–735 (EIRQ…KPKP), and 749–766 (GQEE…HAGE). Residues 698–734 (VQQKRLLDQQEKLLAVIEEQHKEIRQQRQEGEEDKPK) are a coiled coil. T767 bears the Phosphothreonine mark. Basic and acidic residues-rich tracts occupy residues 793–802 (KGQHPLEEVK), 852–894 (EPVH…ETGK), 917–928 (EDSHSKSRHSEP), 957–969 (KSQD…RSEG), and 1010–1022 (QKPE…RDLK). S886 carries the phosphoserine modification.

It belongs to the amino acid/polyamine transporter 2 family. In terms of tissue distribution, only expressed in the pituitary, adrenal gland, stomach and in the upper gastrointestinal tract.

Its subcellular location is the membrane. It carries out the reaction L-glutamate(out) = L-glutamate(in). The enzyme catalyses L-glutamine(out) = L-glutamine(in). It catalyses the reaction L-alanine(in) = L-alanine(out). The catalysed reaction is L-serine(in) = L-serine(out). It carries out the reaction L-leucine(in) = L-leucine(out). Its function is as follows. Facilitates bidirectional transport of amino acids. May act as a glutamate sensor that regulates glutamate-glutamine cycle and mTOR signaling in the brain. The transport mechanism remains to be elucidated. The chain is Solute carrier family 38 member 10 from Rattus norvegicus (Rat).